Reading from the N-terminus, the 310-residue chain is Olfactory receptor 5P54 (310 aa).

Over 1-25 (MNGGNHTSMTELFILGPTEDPTFCI) the chain is Extracellular. Residue Asn5 is glycosylated (N-linked (GlcNAc...) asparagine). A helical membrane pass occupies residues 26–46 (AFFVIFLGVYMVTLVGNISII). Topologically, residues 47-54 (TLIRISSQ) are cytoplasmic. Residues 55–75 (LHTPVYLFLNHLAFVDILYST) traverse the membrane as a helical segment. Over 76–99 (LVSVIMLMELLEHELALPVAACAA) the chain is Extracellular. The cysteines at positions 97 and 189 are disulfide-linked. Residues 100-120 (ELCITVLFGSSECFLLAAMAY) traverse the membrane as a helical segment. Over 121–133 (DCYVAICSPLLYS) the chain is Cytoplasmic. The helical transmembrane segment at 134–154 (TLMSSRVCFLLLGMSYVGGCM) threads the bilayer. Topologically, residues 155–196 (NGWIFTGCLLNLSFYGPYQIDHFFCDFSPLLKLSCSDVSIIG) are extracellular. N-linked (GlcNAc...) asparagine glycosylation is present at Asn165. Residues 197-217 (IIPSISSGSIIVVTVLVIAVF) traverse the membrane as a helical segment. Over 218-237 (YICILMTILKMHSTDGCHKA) the chain is Cytoplasmic. The chain crosses the membrane as a helical span at residues 238 to 258 (FSTCNSYLTAVTLYYGTITFI). Over 259-271 (YVMPKSNYSTEKN) the chain is Extracellular. Asn265 carries an N-linked (GlcNAc...) asparagine glycan. The chain crosses the membrane as a helical span at residues 272 to 292 (KVLSEFYTVVIPMLNHLIYSL). Residues 293–310 (KNRDVKDALRKAIVRVYT) lie on the Cytoplasmic side of the membrane.

This sequence belongs to the G-protein coupled receptor 1 family.

It localises to the cell membrane. Potential odorant receptor. The chain is Olfactory receptor 5P54 from Mus musculus (Mouse).